A 340-amino-acid chain; its full sequence is Formimidoylglutamase (340 aa).

Positions 129, 160, 162, 164, 257, and 259 each coordinate Mn(2+).

Belongs to the arginase family. It depends on Mn(2+) as a cofactor.

It catalyses the reaction N-formimidoyl-L-glutamate + H2O = formamide + L-glutamate. The protein operates within amino-acid degradation; L-histidine degradation into L-glutamate; L-glutamate from N-formimidoyl-L-glutamate (hydrolase route): step 1/1. Catalyzes the conversion of N-formimidoyl-L-glutamate to L-glutamate and formamide. This Vibrio parahaemolyticus serotype O3:K6 (strain RIMD 2210633) protein is Formimidoylglutamase.